A 264-amino-acid polypeptide reads, in one-letter code: Apolipoprotein A-I (264 aa).

The signal sequence occupies residues 1-18 (MKAVLLVVAALFLAGSQA). Repeat copies occupy residues 67-88 (LRLS…ADFG) and 89-110 (LATQ…QIVS). The 10 X approximate tandem repeats stretch occupies residues 67–264 (LRLSDNWDTL…DQASKQLAAQ (198 aa)). One copy of the 3; half-length repeat lies at 111–121 (EDLQDVKHKVQ). 5 repeat units span residues 122 to 143 (PYLE…EKVR), 144 to 165 (PLGI…EKLT), 166 to 187 (PLGE…TQLA), 188 to 207 (PFSE…LKDS), and 208 to 229 (ATLA…EKAK). At Met-193 the chain carries Methionine sulfoxide. One copy of the 9; half-length repeat lies at 230–240 (PALEDLRQGLL). Copy 10 of the repeat occupies 241-264 (PVLENLKASILSSIDQASKQLAAQ).

Belongs to the apolipoprotein A1/A4/E family. In terms of assembly, homodimer. Interacts with APOA1BP and CLU. Component of a sperm activating protein complex (SPAP), consisting of APOA1, an immunoglobulin heavy chain, an immunoglobulin light chain and albumin. Interacts with NDRG1. Interacts with SCGB3A2. Interacts with NAXE and YJEFN3. Glycosylated. Post-translationally, palmitoylated. In terms of processing, phosphorylation sites are present in the extracellular medium.

The protein resides in the secreted. Participates in the reverse transport of cholesterol from tissues to the liver for excretion by promoting cholesterol efflux from tissues and by acting as a cofactor for the lecithin cholesterol acyltransferase (LCAT). As part of the SPAP complex, activates spermatozoa motility. This is Apolipoprotein A-I (APOA1) from Cavia porcellus (Guinea pig).